Here is a 120-residue protein sequence, read N- to C-terminus: Anti-adapter protein IraM (120 aa).

The protein belongs to the IraM/RssC family.

It localises to the cytoplasm. Involved in the stabilization of the sigma stress factor RpoS. The chain is Anti-adapter protein IraM from Salmonella typhimurium (strain LT2 / SGSC1412 / ATCC 700720).